Consider the following 513-residue polypeptide: Sterol 14-alpha demethylase rstn2 (513 aa).

A helical transmembrane segment spans residues 3–23 (WPLIGAYALLAFVAIIALNVT). Residue Cys453 coordinates heme.

It belongs to the cytochrome P450 family. The cofactor is heme.

The protein resides in the membrane. It catalyses the reaction a 14alpha-methyl steroid + 3 reduced [NADPH--hemoprotein reductase] + 3 O2 = a Delta(14) steroid + formate + 3 oxidized [NADPH--hemoprotein reductase] + 4 H2O + 4 H(+). It carries out the reaction a 14alpha-methyl steroid + reduced [NADPH--hemoprotein reductase] + O2 = a 14alpha-hydroxymethyl steroid + oxidized [NADPH--hemoprotein reductase] + H2O + H(+). The catalysed reaction is a 14alpha-hydroxymethyl steroid + reduced [NADPH--hemoprotein reductase] + O2 = a 14alpha-formyl steroid + oxidized [NADPH--hemoprotein reductase] + 2 H2O + H(+). The enzyme catalyses a 14alpha-formyl steroid + reduced [NADPH--hemoprotein reductase] + O2 = a Delta(14) steroid + formate + oxidized [NADPH--hemoprotein reductase] + H2O + 2 H(+). It catalyses the reaction lanosterol + 3 reduced [NADPH--hemoprotein reductase] + 3 O2 = 4,4-dimethyl-5alpha-cholesta-8,14,24-trien-3beta-ol + formate + 3 oxidized [NADPH--hemoprotein reductase] + 4 H2O + 4 H(+). It carries out the reaction lanosterol + reduced [NADPH--hemoprotein reductase] + O2 = 32-hydroxylanosterol + oxidized [NADPH--hemoprotein reductase] + H2O + H(+). The catalysed reaction is 32-hydroxylanosterol + reduced [NADPH--hemoprotein reductase] + O2 = 32-oxolanosterol + oxidized [NADPH--hemoprotein reductase] + 2 H2O + H(+). The enzyme catalyses 32-oxolanosterol + reduced [NADPH--hemoprotein reductase] + O2 = 4,4-dimethyl-5alpha-cholesta-8,14,24-trien-3beta-ol + formate + oxidized [NADPH--hemoprotein reductase] + H2O + 2 H(+). It catalyses the reaction eburicol + 3 reduced [NADPH--hemoprotein reductase] + 3 O2 = 14-demethyleburicol + formate + 3 oxidized [NADPH--hemoprotein reductase] + 4 H2O + 4 H(+). It carries out the reaction eburicol + reduced [NADPH--hemoprotein reductase] + O2 = 32-hydroxyeburicol + oxidized [NADPH--hemoprotein reductase] + H2O + H(+). The catalysed reaction is 32-hydroxyeburicol + reduced [NADPH--hemoprotein reductase] + O2 = 32-oxoeburicol + oxidized [NADPH--hemoprotein reductase] + 2 H2O + H(+). The enzyme catalyses 32-oxoeburicol + reduced [NADPH--hemoprotein reductase] + O2 = 14-demethyleburicol + formate + oxidized [NADPH--hemoprotein reductase] + H2O + 2 H(+). The protein operates within steroid biosynthesis; sterol biosynthesis. Sterol 14-alpha demethylase; part of the gene cluster that mediates the biosynthesis of the tetrahydropyranyl antifungal agent restricticin that acts as an inhibitor of CYP51 and blocks the ergosterol biosynthesis. Sterol 14-alpha-demethylase plays a critical role in the biosynthesis of ergosterol, the major sterol component in fungal membranes that participates in a variety of functions. Rtsn2 acts as a self-resistant CYP51 that contains mutations found in CYP51s isolated from azole resistance strains and that is not inhibited by the final product of the cluster, restricticin. This is Sterol 14-alpha demethylase rstn2 from Aspergillus nomiae NRRL (strain ATCC 15546 / NRRL 13137 / CBS 260.88 / M93).